The sequence spans 293 residues: Large ribosomal RNA subunit accumulation protein YCED homolog 1, chloroplastic (293 aa).

Residues 1–42 (MYYPQPTVSLAAAVALLRPSLRRHSQRASSLLRSSTPPPWVS) constitute a chloroplast transit peptide.

Belongs to the DUF177 domain family. As to expression, highly expressed in shoots and leaves. Detected in roots, embryos and endosperm.

The protein localises to the plastid. The protein resides in the chloroplast. In terms of biological role, plays a role in synthesis, processing and/or stability of 23S rRNA. Required for embryogenesis. May be involved in RPL23 transcript levels regulation in non-photosynthetic plastids. This is Large ribosomal RNA subunit accumulation protein YCED homolog 1, chloroplastic from Zea mays (Maize).